The following is a 253-amino-acid chain: 3-deoxy-manno-octulosonate cytidylyltransferase (253 aa).

The protein belongs to the KdsB family.

It localises to the cytoplasm. It carries out the reaction 3-deoxy-alpha-D-manno-oct-2-ulosonate + CTP = CMP-3-deoxy-beta-D-manno-octulosonate + diphosphate. It functions in the pathway nucleotide-sugar biosynthesis; CMP-3-deoxy-D-manno-octulosonate biosynthesis; CMP-3-deoxy-D-manno-octulosonate from 3-deoxy-D-manno-octulosonate and CTP: step 1/1. It participates in bacterial outer membrane biogenesis; lipopolysaccharide biosynthesis. Functionally, activates KDO (a required 8-carbon sugar) for incorporation into bacterial lipopolysaccharide in Gram-negative bacteria. The chain is 3-deoxy-manno-octulosonate cytidylyltransferase from Acinetobacter baumannii (strain AYE).